An 80-amino-acid polypeptide reads, in one-letter code: Cell division activator CedA (80 aa).

Belongs to the CedA family.

In terms of biological role, activates the cell division inhibited by chromosomal DNA over-replication. The polypeptide is Cell division activator CedA (Salmonella choleraesuis (strain SC-B67)).